Here is a 403-residue protein sequence, read N- to C-terminus: Betaine--homocysteine S-methyltransferase 1 (403 aa).

Residues 8–311 (KGLLERLDAG…YHTRAIAEEL (304 aa)) enclose the Hcy-binding domain. Residues Cys214, Cys296, and Cys297 each contribute to the Zn(2+) site.

In terms of assembly, homotetramer. The cofactor is Zn(2+).

The protein localises to the cytoplasm. The enzyme catalyses L-homocysteine + glycine betaine = N,N-dimethylglycine + L-methionine. Its pathway is amine and polyamine degradation; betaine degradation; sarcosine from betaine: step 1/2. The protein operates within amino-acid biosynthesis; L-methionine biosynthesis via de novo pathway; L-methionine from L-homocysteine (BhmT route): step 1/1. In terms of biological role, involved in the regulation of homocysteine metabolism. Converts betaine and homocysteine to dimethylglycine and methionine, respectively. This reaction is also required for the irreversible oxidation of choline. This is Betaine--homocysteine S-methyltransferase 1 (bhmt) from Xenopus tropicalis (Western clawed frog).